The sequence spans 104 residues: MVRYRMRSPSEGQHQGPGQDHEREEQGQGQELSPERVEDYGRTERGHHHRHRRCKRLHRIHKRRRSCRRRRRHSCRHRRRHRRGCRRSRRRRSCRCRKCRWHYY.

Residues 1–91 form a disordered region; sequence MVRYRMRSPS…RRGCRRSRRR (91 aa). 3 positions are modified to phosphoserine: Ser8, Ser10, and Ser33. Residues 33–44 show a composition bias toward basic and acidic residues; sequence SPERVEDYGRTE. Basic residues predominate over residues 45–91; it reads RGHHHRHRRCKRLHRIHKRRRSCRRRRRHSCRHRRRHRRGCRRSRRR.

This sequence belongs to the protamine P2 family. As to quaternary structure, interacts with TDRP. In terms of processing, proteolytic processing into mature chains is required for histone eviction during spermatogenesis. Transition proteins (TNP1 and TNP2) are required for processing. In terms of tissue distribution, testis.

It is found in the nucleus. The protein resides in the chromosome. Functionally, protamines substitute for histones in the chromatin of sperm during the haploid phase of spermatogenesis. They compact sperm DNA into a highly condensed, stable and inactive complex. The protein is Protamine-2 (Prm2) of Rattus norvegicus (Rat).